Here is a 423-residue protein sequence, read N- to C-terminus: tRNA(Met) cytidine acetate ligase (423 aa).

ATP contacts are provided by residues 7–20 (VVEYNPFHNGHLYH), Gly-102, Asn-165, and Arg-190.

This sequence belongs to the TmcAL family.

The protein localises to the cytoplasm. It carries out the reaction cytidine(34) in elongator tRNA(Met) + acetate + ATP = N(4)-acetylcytidine(34) in elongator tRNA(Met) + AMP + diphosphate. In terms of biological role, catalyzes the formation of N(4)-acetylcytidine (ac(4)C) at the wobble position of elongator tRNA(Met), using acetate and ATP as substrates. First activates an acetate ion to form acetyladenylate (Ac-AMP) and then transfers the acetyl group to tRNA to form ac(4)C34. This chain is tRNA(Met) cytidine acetate ligase, found in Thermosipho africanus (strain TCF52B).